A 471-amino-acid polypeptide reads, in one-letter code: WASH complex subunit 1 (471 aa).

A required for WASH complex assembly region spans residues 1-54 (MTPTGTQHSLAGQTYAVPLIQPDLRREEAIQQVADALQYLQKVSGDIFSRISQR). Positions 1–167 (MTPTGTQHSL…EGLGGLPSNI (167 aa)) are WHD1. A disordered region spans residues 297–471 (EDGVLTARPP…GEEDEDDWES (175 aa)). Positions 304–336 (RPPPPPPPPPPPAPAVLMSVPPPPPPPQAPPGQ) are enriched in pro residues. Residues 353–471 (QGAPKEVVDP…GEEDEDDWES (119 aa)) form a VCA region. A WH2 domain is found at 365 to 387 (GRATLLESIRQAGGIGKAKLRSV). Residues 386-402 (SVKERKLEKKKQKEQEQ) show a composition bias toward basic and acidic residues. A compositionally biased stretch (gly residues) spans 428–442 (SGKGPGSGASEGPGG). Residues 462 to 471 (GEEDEDDWES) are compositionally biased toward acidic residues.

This sequence belongs to the WASH1 family. As to quaternary structure, component of the WASH core complex also described as WASH regulatory complex SHRC composed of WASHC1, WASHC2, WASHC3, WASHC4 and WASHC5. The WASH core complex associates with the F-actin-capping protein dimer (formed by CAPZA1, CAPZA2 or CAPZA3 and CAPZB); the assembly has been initially described as WASH complex. Interacts (via WHD1 region) with WASHC2; the interaction is direct. Interacts with alpha-tubulin. Interacts with BECN1; WASHC1 and AMBRA1 can competitively interact with BECN1. Interacts with BLOC1S2; may associate with the BLOC-1 complex. Interacts with tubulin gamma chain (TUBG1 or TUBG2). Interacts with TBC1D23.

The protein resides in the early endosome membrane. The protein localises to the recycling endosome membrane. It localises to the late endosome. Its subcellular location is the cytoplasmic vesicle. It is found in the autophagosome. The protein resides in the cytoplasm. The protein localises to the cytoskeleton. It localises to the microtubule organizing center. Its subcellular location is the centrosome. It is found in the centriole. Its function is as follows. Acts as a component of the WASH core complex that functions as a nucleation-promoting factor (NPF) at the surface of endosomes, where it recruits and activates the Arp2/3 complex to induce actin polymerization, playing a key role in the fission of tubules that serve as transport intermediates during endosome sorting. Involved in endocytic trafficking of EGF. Involved in transferrin receptor recycling. Regulates the trafficking of endosomal alpha5beta1 integrin to the plasma membrane and involved in invasive cell migration. In T-cells involved in endosome-to-membrane recycling of receptors including T-cell receptor (TCR), CD28 and ITGAL; proposed to be implicated in T-cell proliferation and effector function. In dendritic cells involved in endosome-to-membrane recycling of major histocompatibility complex (MHC) class II probably involving retromer and subsequently allowing antigen sampling, loading and presentation during T-cell activation. Involved in negative regulation of autophagy independently from its role in endosomal sorting by inhibiting BECN1 ubiquitination to inactivate PIK3C3/Vps34 activity. This Bos taurus (Bovine) protein is WASH complex subunit 1.